The sequence spans 255 residues: 4-hydroxy-tetrahydrodipicolinate reductase (255 aa).

Residues 9–14 (GFKGKM), Asp35, 89–91 (GTT), and 115–118 (APNF) contribute to the NAD(+) site. The active-site Proton donor/acceptor is the His145. Residue His146 participates in (S)-2,3,4,5-tetrahydrodipicolinate binding. Residue Lys149 is the Proton donor of the active site. 155–156 (GT) contributes to the (S)-2,3,4,5-tetrahydrodipicolinate binding site.

This sequence belongs to the DapB family.

It localises to the cytoplasm. The catalysed reaction is (S)-2,3,4,5-tetrahydrodipicolinate + NAD(+) + H2O = (2S,4S)-4-hydroxy-2,3,4,5-tetrahydrodipicolinate + NADH + H(+). The enzyme catalyses (S)-2,3,4,5-tetrahydrodipicolinate + NADP(+) + H2O = (2S,4S)-4-hydroxy-2,3,4,5-tetrahydrodipicolinate + NADPH + H(+). It functions in the pathway amino-acid biosynthesis; L-lysine biosynthesis via DAP pathway; (S)-tetrahydrodipicolinate from L-aspartate: step 4/4. Its function is as follows. Catalyzes the conversion of 4-hydroxy-tetrahydrodipicolinate (HTPA) to tetrahydrodipicolinate. This Streptococcus pneumoniae serotype 4 (strain ATCC BAA-334 / TIGR4) protein is 4-hydroxy-tetrahydrodipicolinate reductase.